A 77-amino-acid chain; its full sequence is U8-lycotoxin-Ls1r (77 aa).

The N-terminal stretch at methionine 1–alanine 20 is a signal peptide. A propeptide spanning residues glutamine 21–lysine 26 is cleaved from the precursor.

The protein belongs to the neurotoxin 19 (CSTX) family. 08 (U8-Lctx) subfamily. In terms of processing, contains 4 disulfide bonds. In terms of tissue distribution, expressed by the venom gland.

It localises to the secreted. The polypeptide is U8-lycotoxin-Ls1r (Lycosa singoriensis (Wolf spider)).